Consider the following 690-residue polypeptide: Serotransferrin (690 aa).

An N-terminal signal peptide occupies residues 1-17; that stretch reads MKPLLLLTLLGCLAAAL. Transferrin-like domains are found at residues 24 to 329 and 340 to 670; these read VKWC…SLKK and IKWC…SLRK. A disulfide bond links C27 and C49. The Fe(3+) site is built by D73 and Y103. Intrachain disulfides connect C126–C206, C171–C185, and C234–C248. Hydrogencarbonate is bound by residues T128, K132, A134, and G135. Y200 is a Fe(3+) binding site. H256 is a Fe(3+) binding site. 2 disulfides stabilise this stretch: C343/C379 and C353/C370. Fe(3+) is bound by residues D394 and Y429. 7 disulfide bridges follow: C404/C682, C419/C643, C452/C530, C476/C671, C486/C499, C496/C513, and C570/C584. Residues T454, R458, A460, and G461 each coordinate hydrogencarbonate. Y524 is a Fe(3+) binding site. Residue H592 participates in Fe(3+) binding.

It belongs to the transferrin family. As to quaternary structure, monomer.

It is found in the secreted. Its function is as follows. Transferrins are iron binding transport proteins which can bind two Fe(3+) ions in association with the binding of an anion, usually bicarbonate. This is Serotransferrin (tf) from Oryzias latipes (Japanese rice fish).